The primary structure comprises 269 residues: Flagellar hook-basal body complex protein FlhP (269 aa).

A coiled-coil region spans residues 7–65 (TASTTLNQLQQQIDTISSNLSNSNTTGYKAKDTNFSELVRQQFDQVDEKNEEVAKARKT).

It belongs to the flagella basal body rod proteins family.

This chain is Flagellar hook-basal body complex protein FlhP (flhP), found in Bacillus subtilis (strain 168).